The following is a 118-amino-acid chain: Ferredoxin-thioredoxin reductase, catalytic chain (118 aa).

[4Fe-4S] cluster is bound at residue C57. The active-site Nucleophile is C59. A disulfide bridge connects residues C59 and C89. C76, C78, and C87 together coordinate [4Fe-4S] cluster.

It belongs to the ferredoxin thioredoxin reductase beta subunit family. As to quaternary structure, heterodimer of subunit A (variable subunit) and subunit B (catalytic subunit). Heterodimeric FTR forms a complex with ferredoxin and thioredoxin. It depends on [4Fe-4S] cluster as a cofactor.

The protein localises to the plastid. It localises to the chloroplast. The catalysed reaction is [thioredoxin]-disulfide + 2 reduced [2Fe-2S]-[ferredoxin] + 2 H(+) = [thioredoxin]-dithiol + 2 oxidized [2Fe-2S]-[ferredoxin]. Functionally, catalytic subunit of the ferredoxin-thioredoxin reductase (FTR), which catalyzes the two-electron reduction of thioredoxins by the electrons provided by reduced ferredoxin. This chain is Ferredoxin-thioredoxin reductase, catalytic chain (ftrB), found in Porphyra purpurea (Red seaweed).